The chain runs to 447 residues: Tubulin beta chain (447 aa).

Residues glutamine 11, glutamate 69, serine 138, glycine 142, threonine 143, glycine 144, asparagine 204, and asparagine 226 each coordinate GTP. Position 69 (glutamate 69) interacts with Mg(2+). The segment at glutamate 427–glutamate 447 is disordered. Positions methionine 430–glutamate 447 are enriched in acidic residues.

This sequence belongs to the tubulin family. As to quaternary structure, dimer of alpha and beta chains. A typical microtubule is a hollow water-filled tube with an outer diameter of 25 nm and an inner diameter of 15 nM. Alpha-beta heterodimers associate head-to-tail to form protofilaments running lengthwise along the microtubule wall with the beta-tubulin subunit facing the microtubule plus end conferring a structural polarity. Microtubules usually have 13 protofilaments but different protofilament numbers can be found in some organisms and specialized cells. The cofactor is Mg(2+).

It localises to the cytoplasm. The protein resides in the cytoskeleton. Tubulin is the major constituent of microtubules, a cylinder consisting of laterally associated linear protofilaments composed of alpha- and beta-tubulin heterodimers. Microtubules grow by the addition of GTP-tubulin dimers to the microtubule end, where a stabilizing cap forms. Below the cap, tubulin dimers are in GDP-bound state, owing to GTPase activity of alpha-tubulin. The chain is Tubulin beta chain (TBB1) from Uromyces fabae (Rust fungus).